The following is an 85-amino-acid chain: Beta-defensin 18 (85 aa).

The N-terminal stretch at 1-23 (MQSAMKLFFIFLIFVFSVSCGPS) is a signal peptide. Intrachain disulfides connect Cys39/Cys65, Cys46/Cys60, and Cys50/Cys66.

This sequence belongs to the beta-defensin family.

Its subcellular location is the secreted. Its function is as follows. Has antibacterial activity. The sequence is that of Beta-defensin 18 (Defb18) from Rattus norvegicus (Rat).